The following is a 148-amino-acid chain: Small ribosomal subunit protein bS6 (148 aa).

The interval 96-148 is disordered; that stretch reads HEEGQSAMLTRRDDRRERDGDDRPRRREGGFDRGDRGDRSPRRPRDNEAGEGA.

It belongs to the bacterial ribosomal protein bS6 family.

In terms of biological role, binds together with bS18 to 16S ribosomal RNA. The protein is Small ribosomal subunit protein bS6 of Brucella suis (strain ATCC 23445 / NCTC 10510).